Consider the following 625-residue polypeptide: tRNA uridine 5-carboxymethylaminomethyl modification enzyme MnmG (625 aa).

14–19 (GAGHAG) contributes to the FAD binding site. 273–287 (GPRYCPSIEDKIVRF) contacts NAD(+).

The protein belongs to the MnmG family. Homodimer. Heterotetramer of two MnmE and two MnmG subunits. It depends on FAD as a cofactor.

The protein resides in the cytoplasm. NAD-binding protein involved in the addition of a carboxymethylaminomethyl (cmnm) group at the wobble position (U34) of certain tRNAs, forming tRNA-cmnm(5)s(2)U34. This is tRNA uridine 5-carboxymethylaminomethyl modification enzyme MnmG from Clostridium botulinum (strain Okra / Type B1).